Here is a 373-residue protein sequence, read N- to C-terminus: MELSEIKRNIDTYNEKLEQLRGSLDLEAKETNIQEYEEMMTDPTFWDNQEKAQDVIDKNNALKSVVNAYRTLESELEDMDTTRALLLEEDDETMKQDLEQSVQDFKNELDQFELQLLLDGPYDANNAIMELHPGAGGTESQDWTNMLLRMYQRYCEQKGFNVEIADYLPGDEAGVKSVTLIVKGHNAYGYLKAEKGVHRLVRISPFDSSGRRHTSFASCDVIPQFNNTEIEIDINPDDITVDTFRASGAGGQHINKTESAIRITHHPTGIVVNNQNERSQIKNREAAMKTLKSKLYQLKIEEQEQEMAEIRGEQKEIGWGSQIRSYVFHPYAMVKDHRTNEETGKVDAVMDGDIGPFIEAFLRSQMDQHENEG.

N5-methylglutamine is present on Gln252.

It belongs to the prokaryotic/mitochondrial release factor family. Methylated by PrmC. Methylation increases the termination efficiency of RF2.

Its subcellular location is the cytoplasm. Its function is as follows. Peptide chain release factor 2 directs the termination of translation in response to the peptide chain termination codons UGA and UAA. The polypeptide is Peptide chain release factor 2 (Staphylococcus saprophyticus subsp. saprophyticus (strain ATCC 15305 / DSM 20229 / NCIMB 8711 / NCTC 7292 / S-41)).